Reading from the N-terminus, the 499-residue chain is Probable cytosol aminopeptidase (499 aa).

Mn(2+) is bound by residues Lys269 and Asp274. Residue Lys281 is part of the active site. Mn(2+)-binding residues include Asp292, Asp351, and Glu353. Arg355 is an active-site residue.

It belongs to the peptidase M17 family. Requires Mn(2+) as cofactor.

The protein resides in the cytoplasm. It carries out the reaction Release of an N-terminal amino acid, Xaa-|-Yaa-, in which Xaa is preferably Leu, but may be other amino acids including Pro although not Arg or Lys, and Yaa may be Pro. Amino acid amides and methyl esters are also readily hydrolyzed, but rates on arylamides are exceedingly low.. The enzyme catalyses Release of an N-terminal amino acid, preferentially leucine, but not glutamic or aspartic acids.. In terms of biological role, presumably involved in the processing and regular turnover of intracellular proteins. Catalyzes the removal of unsubstituted N-terminal amino acids from various peptides. This Actinobacillus pleuropneumoniae serotype 7 (strain AP76) protein is Probable cytosol aminopeptidase.